Consider the following 297-residue polypeptide: GTP cyclohydrolase FolE2 (297 aa).

Disordered regions lie at residues 1 to 21 and 180 to 207; these read MTHA…SERD and IRAE…RERP.

This sequence belongs to the GTP cyclohydrolase IV family.

It carries out the reaction GTP + H2O = 7,8-dihydroneopterin 3'-triphosphate + formate + H(+). It participates in cofactor biosynthesis; 7,8-dihydroneopterin triphosphate biosynthesis; 7,8-dihydroneopterin triphosphate from GTP: step 1/1. Converts GTP to 7,8-dihydroneopterin triphosphate. This is GTP cyclohydrolase FolE2 from Methylibium petroleiphilum (strain ATCC BAA-1232 / LMG 22953 / PM1).